The following is a 280-amino-acid chain: Undecaprenyl-diphosphatase (280 aa).

8 consecutive transmembrane segments (helical) span residues 2–22 (FIIE…TEWL), 45–65 (AFME…VVVI), 86–106 (WQLW…GLFL), 114–134 (FYNL…FIYL), 147–167 (LASL…LALF), 188–208 (SVVT…ASGW), 223–243 (GQIF…LVVI), and 255–275 (FTIF…YAAI).

This sequence belongs to the UppP family.

It localises to the cell membrane. The enzyme catalyses di-trans,octa-cis-undecaprenyl diphosphate + H2O = di-trans,octa-cis-undecaprenyl phosphate + phosphate + H(+). Catalyzes the dephosphorylation of undecaprenyl diphosphate (UPP). Confers resistance to bacitracin. In Streptococcus sanguinis (strain SK36), this protein is Undecaprenyl-diphosphatase.